The chain runs to 617 residues: Probable translation initiation factor IF-2 (617 aa).

Residues L14–L231 enclose the tr-type G domain. The tract at residues G23 to T30 is G1. G23–T30 lines the GTP pocket. The segment at G48 to H52 is G2. The G3 stretch occupies residues D87–G90. GTP-binding positions include D87 to H91 and N141 to D144. The tract at residues N141–D144 is G4. Residues S209 to R211 are G5.

Belongs to the TRAFAC class translation factor GTPase superfamily. Classic translation factor GTPase family. IF-2 subfamily.

Function in general translation initiation by promoting the binding of the formylmethionine-tRNA to ribosomes. Seems to function along with eIF-2. The chain is Probable translation initiation factor IF-2 (infB) from Aeropyrum pernix (strain ATCC 700893 / DSM 11879 / JCM 9820 / NBRC 100138 / K1).